Consider the following 463-residue polypeptide: Adenosylhomocysteinase (463 aa).

The substrate site is built by threonine 54, aspartate 129, and glutamate 189. 190–192 (TTT) is an NAD(+) binding site. Residues lysine 219 and aspartate 223 each contribute to the substrate site. NAD(+) is bound by residues asparagine 224, 253-258 (GYGDVG), glutamate 276, asparagine 311, 332-334 (IGH), and asparagine 377.

It belongs to the adenosylhomocysteinase family. NAD(+) is required as a cofactor.

The protein localises to the cytoplasm. It catalyses the reaction S-adenosyl-L-homocysteine + H2O = L-homocysteine + adenosine. Its pathway is amino-acid biosynthesis; L-homocysteine biosynthesis; L-homocysteine from S-adenosyl-L-homocysteine: step 1/1. May play a key role in the regulation of the intracellular concentration of adenosylhomocysteine. The polypeptide is Adenosylhomocysteinase (Caulobacter vibrioides (strain ATCC 19089 / CIP 103742 / CB 15) (Caulobacter crescentus)).